Reading from the N-terminus, the 100-residue chain is uncharacterized protein (100 aa).

The interval 1-86 (MRGTRRGPSG…RHRPPEVTEP (86 aa)) is disordered. Over residues 35–48 (DTPPPRAPPPPPPL) the composition is skewed to pro residues.

This is an uncharacterized protein from Human herpesvirus 6A (strain Uganda-1102) (HHV-6 variant A).